The primary structure comprises 84 residues: ATP synthase subunit c (84 aa).

2 consecutive transmembrane segments (helical) span residues 9–29 and 54–74; these read IFGS…GFSL and IVAG…LLFI.

Belongs to the ATPase C chain family. As to quaternary structure, F-type ATPases have 2 components, F(1) - the catalytic core - and F(0) - the membrane proton channel. F(1) has five subunits: alpha(3), beta(3), gamma(1), delta(1), epsilon(1). F(0) has three main subunits: a(1), b(2) and c(10-14). The alpha and beta chains form an alternating ring which encloses part of the gamma chain. F(1) is attached to F(0) by a central stalk formed by the gamma and epsilon chains, while a peripheral stalk is formed by the delta and b chains.

Its subcellular location is the cell inner membrane. In terms of biological role, f(1)F(0) ATP synthase produces ATP from ADP in the presence of a proton or sodium gradient. F-type ATPases consist of two structural domains, F(1) containing the extramembraneous catalytic core and F(0) containing the membrane proton channel, linked together by a central stalk and a peripheral stalk. During catalysis, ATP synthesis in the catalytic domain of F(1) is coupled via a rotary mechanism of the central stalk subunits to proton translocation. Key component of the F(0) channel; it plays a direct role in translocation across the membrane. A homomeric c-ring of between 10-14 subunits forms the central stalk rotor element with the F(1) delta and epsilon subunits. This chain is ATP synthase subunit c, found in Histophilus somni (strain 2336) (Haemophilus somnus).